A 104-amino-acid polypeptide reads, in one-letter code: MQRLCAHALILVLALAAFCEASWKPHSQLQDAPVAPGANKGQEPLRMDRLGPASHPRRQLGLQDPPHMVADLSKKQGPWVEEEEAAYGWMDFGRRSAEEGDQHP.

Positions 1–21 (MQRLCAHALILVLALAAFCEA) are cleaved as a signal peptide. The propeptide occupies 22–58 (SWKPHSQLQDAPVAPGANKGQEPLRMDRLGPASHPRR). The disordered stretch occupies residues 26-70 (HSQLQDAPVAPGANKGQEPLRMDRLGPASHPRRQLGLQDPPHMVA). Sulfotyrosine is present on tyrosine 87. The residue at position 92 (phenylalanine 92) is a Phenylalanine amide. Phosphoserine is present on serine 96. Positions 96-104 (SAEEGDQHP) are excised as a propeptide.

Belongs to the gastrin/cholecystokinin family. Post-translationally, sulfation enhances proteolytic processing, and blocks peptide degradation. Levels of sulfation differ between proteolytically-cleaved gastrins and between tissues.

Its subcellular location is the secreted. Functionally, gastrin stimulates the stomach mucosa to produce and secrete hydrochloric acid and the pancreas to secrete its digestive enzymes. It also stimulates smooth muscle contraction and increases blood circulation and water secretion in the stomach and intestine. The protein is Gastrin (GAST) of Ovis aries (Sheep).